The sequence spans 354 residues: Maleylacetate reductase 1 (354 aa).

The protein belongs to the iron-containing alcohol dehydrogenase family. Homodimer.

It carries out the reaction 3-oxoadipate + NAD(+) = maleylacetate + NADH + H(+). It catalyses the reaction 3-oxoadipate + NADP(+) = maleylacetate + NADPH + H(+). The protein operates within aromatic compound metabolism; 3-chlorocatechol degradation. The chain is Maleylacetate reductase 1 (tfdFI) from Cupriavidus pinatubonensis (strain JMP 134 / LMG 1197) (Cupriavidus necator (strain JMP 134)).